A 154-amino-acid polypeptide reads, in one-letter code: RING finger protein 11 (154 aa).

The span at Met-1 to Asp-12 shows a compositional bias: polar residues. Residues Met-1 to Thr-52 form a disordered region. Gly-2 carries the N-myristoyl glycine lipid modification. Residue Cys-4 is the site of S-palmitoyl cysteine attachment. Ser-14 and Ser-25 each carry phosphoserine. Residues Pro-37–Tyr-40 carry the PPxY motif motif. The RING-type zinc finger occupies Cys-99–Met-140. Position 135 is a phosphothreonine; by PKB/AKT1 (Thr-135).

In terms of assembly, interacts (when phosphorylated) with 14-3-3. Interacts with the E3 ubiquitin-ligases NEDD4, ITCH, SMURF2 and WWP1. Also interacts with the E2 ubiquitin-conjugating enzymes UBE2D1 and UBE2N, but neither with CDC34, nor with UBE2L3. Interacts with ZNF350, EPS15 and STAMBP. After TNF stimulation, interacts with TAX1BP1, TNFAIP3 and RIPK1; these interactions are transient and they are lost after 1 hour of stimulation with TNF. Interacts with GGA1. Ubiquitinated in the presence of ITCH, SMURF2 and UBE2D1, as well as WWP1. In terms of processing, phosphorylation by PKB/AKT1 may accelerate degradation by the proteasome. Post-translationally, acylation at both Gly-2 and Cys-4 is required for proper localization to the endosomes.

Its subcellular location is the early endosome. The protein resides in the recycling endosome. It is found in the cytoplasm. The protein localises to the nucleus. Functionally, essential component of a ubiquitin-editing protein complex, comprising also TNFAIP3, ITCH and TAX1BP1, that ensures the transient nature of inflammatory signaling pathways. Promotes the association of TNFAIP3 to RIPK1 after TNF stimulation. TNFAIP3 deubiquitinates 'Lys-63' polyubiquitin chains on RIPK1 and catalyzes the formation of 'Lys-48'-polyubiquitin chains. This leads to RIPK1 proteasomal degradation and consequently termination of the TNF- or LPS-mediated activation of NF-kappa-B. Recruits STAMBP to the E3 ubiquitin-ligase SMURF2 for ubiquitination, leading to its degradation by the 26S proteasome. The polypeptide is RING finger protein 11 (Rnf11) (Mus musculus (Mouse)).